A 433-amino-acid chain; its full sequence is Gamma-glutamyl phosphate reductase 1 (433 aa).

This sequence belongs to the gamma-glutamyl phosphate reductase family.

Its subcellular location is the cytoplasm. It carries out the reaction L-glutamate 5-semialdehyde + phosphate + NADP(+) = L-glutamyl 5-phosphate + NADPH + H(+). It functions in the pathway amino-acid biosynthesis; L-proline biosynthesis; L-glutamate 5-semialdehyde from L-glutamate: step 2/2. Its function is as follows. Catalyzes the NADPH-dependent reduction of L-glutamate 5-phosphate into L-glutamate 5-semialdehyde and phosphate. The product spontaneously undergoes cyclization to form 1-pyrroline-5-carboxylate. In Synechocystis sp. (strain ATCC 27184 / PCC 6803 / Kazusa), this protein is Gamma-glutamyl phosphate reductase 1.